Reading from the N-terminus, the 163-residue chain is Cyclic pyranopterin monophosphate synthase (163 aa).

Residues 75–77 (LCH) and 113–114 (ME) contribute to the substrate site. Aspartate 128 is an active-site residue.

The protein belongs to the MoaC family. Homohexamer; trimer of dimers.

It catalyses the reaction (8S)-3',8-cyclo-7,8-dihydroguanosine 5'-triphosphate = cyclic pyranopterin phosphate + diphosphate. The protein operates within cofactor biosynthesis; molybdopterin biosynthesis. In terms of biological role, catalyzes the conversion of (8S)-3',8-cyclo-7,8-dihydroguanosine 5'-triphosphate to cyclic pyranopterin monophosphate (cPMP). The chain is Cyclic pyranopterin monophosphate synthase from Jannaschia sp. (strain CCS1).